We begin with the raw amino-acid sequence, 1205 residues long: Chromosome partition protein Smc (1205 aa).

32–39 (PNGSGKSN) is an ATP binding site. Coiled coils occupy residues 169–288 (KHRK…SIQH) and 330–499 (EELE…GLQR). In terms of domain architecture, SMC hinge spans 514-628 (GLFGSIAQLV…VNDLTEAMGL (115 aa)). Coiled-coil stretches lie at residues 661–771 (LEVT…AQET), 802–836 (AVRTAEERANAVRGRADSLRRAAAAEREARVRAQQ), and 979–1033 (DRVT…KDLL).

Belongs to the SMC family. Homodimer.

It is found in the cytoplasm. Required for chromosome condensation and partitioning. This chain is Chromosome partition protein Smc, found in Mycobacterium tuberculosis (strain ATCC 25618 / H37Rv).